The chain runs to 262 residues: Membrane protein US15 (262 aa).

7 helical membrane-spanning segments follow: residues 46–66 (GAVG…CYAA), 77–97 (CLTE…VIFI), 108–128 (IGVL…ICLC), 133–153 (LVIS…GVAL), 163–183 (QIVV…VVIL), 186–206 (GWSW…CLAV), and 226–246 (LLAA…VLRI).

This sequence belongs to the HHV-5 US12 protein family.

The protein resides in the host membrane. This Human cytomegalovirus (strain Merlin) (HHV-5) protein is Membrane protein US15 (US15).